The following is a 430-amino-acid chain: Asparagine--tRNA ligase (430 aa).

This sequence belongs to the class-II aminoacyl-tRNA synthetase family. As to quaternary structure, homodimer.

It localises to the cytoplasm. It catalyses the reaction tRNA(Asn) + L-asparagine + ATP = L-asparaginyl-tRNA(Asn) + AMP + diphosphate + H(+). This Listeria monocytogenes serotype 4b (strain F2365) protein is Asparagine--tRNA ligase.